The following is a 197-amino-acid chain: Imidazoleglycerol-phosphate dehydratase (197 aa).

The protein belongs to the imidazoleglycerol-phosphate dehydratase family.

The protein resides in the cytoplasm. The catalysed reaction is D-erythro-1-(imidazol-4-yl)glycerol 3-phosphate = 3-(imidazol-4-yl)-2-oxopropyl phosphate + H2O. It participates in amino-acid biosynthesis; L-histidine biosynthesis; L-histidine from 5-phospho-alpha-D-ribose 1-diphosphate: step 6/9. The polypeptide is Imidazoleglycerol-phosphate dehydratase (Novosphingobium aromaticivorans (strain ATCC 700278 / DSM 12444 / CCUG 56034 / CIP 105152 / NBRC 16084 / F199)).